Reading from the N-terminus, the 853-residue chain is Auxin response factor 23 (853 aa).

The disordered stretch occupies residues 118–141 (PESKQQEDNGSTEEEVPSAPAAGH). The TF-B3 DNA-binding region spans 149 to 251 (FCKTLTASDT…ELRVGVRRAM (103 aa)). Disordered regions lie at residues 422-484 (ESEP…RMQM) and 647-723 (PAKS…QGVS). Residues 425–455 (PNGTQRTFQTQENATPKSGFGNSSELESAQK) show a composition bias toward polar residues. Over residues 672–686 (EWRRPDVTEVEKCSD) the composition is skewed to basic and acidic residues. A compositionally biased stretch (polar residues) spans 706–723 (PSSQQASRNMSCKSQGVS). The region spanning 725–809 (RSCKKVHKQG…HKIFIYTREE (85 aa)) is the PB1 domain. The segment at 815-853 (PGTLNSRSEDSHANSMERGSVGREMRGCLSTSSLNSENC) is disordered. The span at 843-853 (LSTSSLNSENC) shows a compositional bias: polar residues.

This sequence belongs to the ARF family. As to quaternary structure, homodimers and heterodimers. Interacts with CRL1. Expressed in roots, culms, leaves and young panicles.

It is found in the nucleus. In terms of biological role, auxin response factors (ARFs) are transcriptional factors that bind specifically to the DNA sequence 5'-TGTCTC-3' found in the auxin-responsive promoter elements (AuxREs). This Oryza sativa subsp. japonica (Rice) protein is Auxin response factor 23 (ARF23).